The primary structure comprises 129 residues: Glycoprotein hormone alpha-2 (129 aa).

The signal sequence occupies residues 1 to 23 (MPMASPQTLVLYLLVLAVTEAWG). Intrachain disulfides connect C31–C89, C48–C103, C57–C119, and C61–C121. N-linked (GlcNAc...) asparagine glycans are attached at residues N37 and N81.

It belongs to the glycoprotein hormones subunit alpha family. As to quaternary structure, heterodimer with GPHB5; this heterodimer interacts with thyroid-stimulating hormone receptor (TSHR), and hence stimulates cAMP production. Post-translationally, glycosylated. Found in a variety of tissues.

The protein resides in the secreted. Functionally, functions as a heterodimeric glycoprotein hormone with GPHB5 able to bind and activate the thyroid-stimulating hormone receptor (TSHR), leading to increased cAMP production. Plays a central role in controlling thyroid cell metabolism. The chain is Glycoprotein hormone alpha-2 (GPHA2) from Homo sapiens (Human).